The following is a 274-amino-acid chain: NADPH-dependent 7-cyano-7-deazaguanine reductase (274 aa).

Substrate is bound at residue 80-82 (VES). Residue 82-83 (SK) participates in NADPH binding. Residue cysteine 181 is the Thioimide intermediate of the active site. The Proton donor role is filled by aspartate 188. Residue 220-221 (HE) participates in substrate binding. 249-250 (RG) contacts NADPH.

The protein belongs to the GTP cyclohydrolase I family. QueF type 2 subfamily. In terms of assembly, homodimer.

It is found in the cytoplasm. The catalysed reaction is 7-aminomethyl-7-carbaguanine + 2 NADP(+) = 7-cyano-7-deazaguanine + 2 NADPH + 3 H(+). It participates in tRNA modification; tRNA-queuosine biosynthesis. In terms of biological role, catalyzes the NADPH-dependent reduction of 7-cyano-7-deazaguanine (preQ0) to 7-aminomethyl-7-deazaguanine (preQ1). The chain is NADPH-dependent 7-cyano-7-deazaguanine reductase from Burkholderia ambifaria (strain MC40-6).